The following is a 1409-amino-acid chain: Receptor-type tyrosine-protein phosphatase (1409 aa).

Positions 1-22 are cleaved as a signal peptide; it reads MRINRWIWWATVILLYLRTGLA. Residues 23-712 are Extracellular-facing; sequence ADFFRSSEEN…LLDTESSSSG (690 aa). The tract at residues 32–53 is disordered; it reads NDRKSSDDLDNFNSTKIEPDKP. An Ig-like C2-type domain is found at 159 to 267; sequence PTKCDKRDLA…TASASDLDVT (109 aa). Residues C189 and C255 are joined by a disulfide bond. Fibronectin type-III domains follow at residues 276–366 and 372–502; these read APRQ…TKQK and KEED…AQPD. A helical membrane pass occupies residues 713-733; the sequence is FGIFMKIILPFLLFLAFATGV. The Cytoplasmic portion of the chain corresponds to 734–1409; the sequence is TMFFVNRKGH…LADYISKTYR (676 aa). Tyrosine-protein phosphatase domains are found at residues 793 to 1072 and 1135 to 1403; these read FAQE…LAEW and LEEE…LADY. Catalysis depends on phosphocysteine intermediate residues C1013 and C1344.

It belongs to the protein-tyrosine phosphatase family. Receptor class 2A subfamily. In terms of tissue distribution, expressed in muscles, hypodermis and a subset of neurons. Expressed in the AVA neurons, with high expression in the anterior half of the preanal ganglion where AVA neurons contact the PHB neurons.

It is found in the cell membrane. It localises to the synapse. The catalysed reaction is O-phospho-L-tyrosyl-[protein] + H2O = L-tyrosyl-[protein] + phosphate. Its function is as follows. Possesses an intrinsic protein tyrosine phosphatase (PTPase) activity. Regulates egl-15 activity which is required for hypodermis-mediated fluid homeostasis and protein degradation in muscle. During the formation of neuromuscular junctions at the larval stage, negatively regulates membrane protrusion from body wall muscles. Plays a role in nicotinic acetylcholine receptor (nAChR)-mediated sensitivity to nicotine. Regulates synaptic levels of nAchR subunit lev-1 in the nerve cord. Promotes the outgrowth of the quaternary dendritic branches of the PVD sensory neurons. In parallel to the sax-7/mnr-1 pathway, also controls the extension of the PVD primary branches. Acts in the netrin/DCC pathway to mediate the formation of synapses between the AVA interneurons and the PHB sensory neurons. Also required for the formation of synapses between the AVA interneurons and the VA10 motor neurons. The polypeptide is Receptor-type tyrosine-protein phosphatase (Caenorhabditis elegans).